The primary structure comprises 213 residues: Large ribosomal subunit protein uL3 (213 aa).

Belongs to the universal ribosomal protein uL3 family. Part of the 50S ribosomal subunit. Forms a cluster with proteins L14 and L19.

In terms of biological role, one of the primary rRNA binding proteins, it binds directly near the 3'-end of the 23S rRNA, where it nucleates assembly of the 50S subunit. The polypeptide is Large ribosomal subunit protein uL3 (Kosmotoga olearia (strain ATCC BAA-1733 / DSM 21960 / TBF 19.5.1)).